Reading from the N-terminus, the 227-residue chain is ATP-dependent Clp protease proteolytic subunit (227 aa).

Ser123 acts as the Nucleophile in catalysis. The active site involves His148.

This sequence belongs to the peptidase S14 family. In terms of assembly, fourteen ClpP subunits assemble into 2 heptameric rings which stack back to back to give a disk-like structure with a central cavity, resembling the structure of eukaryotic proteasomes.

It is found in the cytoplasm. It catalyses the reaction Hydrolysis of proteins to small peptides in the presence of ATP and magnesium. alpha-casein is the usual test substrate. In the absence of ATP, only oligopeptides shorter than five residues are hydrolyzed (such as succinyl-Leu-Tyr-|-NHMec, and Leu-Tyr-Leu-|-Tyr-Trp, in which cleavage of the -Tyr-|-Leu- and -Tyr-|-Trp bonds also occurs).. In terms of biological role, cleaves peptides in various proteins in a process that requires ATP hydrolysis. Has a chymotrypsin-like activity. Plays a major role in the degradation of misfolded proteins. This Chlorobium phaeobacteroides (strain DSM 266 / SMG 266 / 2430) protein is ATP-dependent Clp protease proteolytic subunit.